The chain runs to 366 residues: MSATRRTIASAGSIVVKIGSSALTSLVGGLDVGRLDALADAIEDRMRAGSDVVVVSSGAVGAGLAPLGLTKRPRDLATKQAAASVGQLALAHAWGTSFARYGRTVGQVLLTADDIARRAQHRNAQRTLDRLRALHAVAIVNENDTVATAELRFGDNDRLAALVAHLVGADALVLLSDVDGLYDGDPRKGNATLIPEVNSPEDLDGVVAGSGGALGTGGMASKLSAARLAADAGVPVLLAAASDAGAALRDAGVGTAFVARPSRLSARKFWVRHAADEQGILHIDEGAVRAVVTKRRSLLPAGISAVSGRFYGGDVVSLLGPDERPVARGVVAYDSAEISDILGKSTQELPAEMQRPVVHADDLVPL.

Lys17 serves as a coordination point for ATP. Substrate contacts are provided by Ser57, Asp144, and Asn156. ATP contacts are provided by residues 176–177 and 216–222; these read SD and TGGMASK. A PUA domain is found at 278-352; it reads QGILHIDEGA…GKSTQELPAE (75 aa).

The protein belongs to the glutamate 5-kinase family.

It localises to the cytoplasm. The catalysed reaction is L-glutamate + ATP = L-glutamyl 5-phosphate + ADP. Its pathway is amino-acid biosynthesis; L-proline biosynthesis; L-glutamate 5-semialdehyde from L-glutamate: step 1/2. Its function is as follows. Catalyzes the transfer of a phosphate group to glutamate to form L-glutamate 5-phosphate. The chain is Glutamate 5-kinase from Rhodococcus jostii (strain RHA1).